The primary structure comprises 359 residues: Proton-gated ion channel (359 aa).

The N-terminal stretch at 1 to 43 (MFPTGWRPKLSESIAASRMLWQPMAAVAVVQIGLLWFSPPVWG) is a signal peptide. Residues 44-235 (QDMVSPPPPI…LDYQLRISRQ (192 aa)) lie on the Periplasmic side of the membrane. A helical transmembrane segment spans residues 236–258 (YFSYIPNIILPMLFILFISWTAF). The Cytoplasmic segment spans residues 259–261 (WST). A helical transmembrane segment spans residues 262 to 286 (SYEANVTLVVSTLIAHIAFNILVET). Topologically, residues 287–294 (NLPKTPYM) are periplasmic. The helical transmembrane segment at 295-323 (TYTGAIIFMIYLFYFVAVIEVTVQHYLKV) threads the bilayer. The Cytoplasmic portion of the chain corresponds to 324–326 (ESQ). The helical transmembrane segment at 327–359 (PARAASITRASRIAFPVVFLLANIILAFLFFGF) threads the bilayer.

It belongs to the ligand-gated ion channel (TC 1.A.9) family. Homopentamer.

Its subcellular location is the cell inner membrane. Its activity is regulated as follows. Tetraethylammonium (TEA) and tetrabutylammonium (TBA) inhibit the proton-activated currents in a dose- and voltage-dependent manner in vitro, whereas the blocker of acid sensing ion channels, amiloride, has no effect. Channel current of GLIC can be inhibited by inhaled and intravenous general anesthetics at and below concentrations used clinically. Ion conduction is also inhibited by lidocaine and by divalent transition metal ions such as cadmium ions. In terms of biological role, cationic channel with similar permeabilities for Na(+) and K(+), that is activated by an increase of the proton concentration on the extracellular side. Displays no permeability for chloride ions. Shows slow kinetics of activation, no desensitization and a single channel conductance of 8 pS. Might contribute to adaptation to external pH change. The protein is Proton-gated ion channel (glvI) of Gloeobacter violaceus (strain ATCC 29082 / PCC 7421).